The primary structure comprises 21 residues: Venom peptide Tv1 (21 aa).

Cystine bridges form between C4-C20, C5-C21, and C7-C16.

As to expression, expressed by the salivary gland. This peptide is considered as a venom peptide.

The protein localises to the secreted. Functionally, injections of 20 uM of this synthetic peptide (Ile) causes partial paralysis to polychaete worms (Nereis virens), the natural prey of terebrid snails. This paralysis may be due to an inhibition of nicotinic receptors at the neuromuscular junction. The chain is Venom peptide Tv1 from Terebra variegata (Variegate auger snail).